Consider the following 578-residue polypeptide: Type I restriction enzyme MjaVIII methylase subunit (578 aa).

Residues Glu-250 to Ile-255, Ser-280 to Ser-282, Glu-303, and Asp-332 to Ser-333 each bind S-adenosyl-L-methionine.

The protein belongs to the N(4)/N(6)-methyltransferase family. As to quaternary structure, the type I restriction/modification system is composed of three polypeptides R, M and S.

The enzyme catalyses a 2'-deoxyadenosine in DNA + S-adenosyl-L-methionine = an N(6)-methyl-2'-deoxyadenosine in DNA + S-adenosyl-L-homocysteine + H(+). Its function is as follows. The subtype gamma methyltransferase (M) subunit of a type I restriction enzyme. The M and S subunits together form a methyltransferase (MTase) that methylates A-2 on the top and A-3 on the bottom strand of the sequence 5'-GAYN(5)GTAA-3'. In the presence of the R subunit the complex can also act as an endonuclease, binding to the same target sequence but cutting the DNA some distance from this site. Whether the DNA is cut or modified depends on the methylation state of the target sequence. When the target site is unmodified, the DNA is cut. When the target site is hemimethylated, the complex acts as a maintenance MTase modifying the DNA so that both strands become methylated. After locating a non-methylated recognition site, the enzyme complex serves as a molecular motor that translocates DNA in an ATP-dependent manner until a collision occurs that triggers cleavage. The polypeptide is Type I restriction enzyme MjaVIII methylase subunit (Methanocaldococcus jannaschii (strain ATCC 43067 / DSM 2661 / JAL-1 / JCM 10045 / NBRC 100440) (Methanococcus jannaschii)).